Here is a 156-residue protein sequence, read N- to C-terminus: MSRRHSAEKREVIPDAKYGDIILTKFMNSIMYDGKKSIAEAIVYGAFDIIEQKSHNEPLSVFKQALDNVAPSIEVRSRRVGGATYQVPVEVRSERRQALAIRWIITAARGRNDKTMIDRLSAELLDAANNRGNAVKKREDTHRMAEANRAFSHYRW.

Belongs to the universal ribosomal protein uS7 family. Part of the 30S ribosomal subunit. Contacts proteins S9 and S11.

One of the primary rRNA binding proteins, it binds directly to 16S rRNA where it nucleates assembly of the head domain of the 30S subunit. Is located at the subunit interface close to the decoding center, probably blocks exit of the E-site tRNA. This chain is Small ribosomal subunit protein uS7, found in Beijerinckia indica subsp. indica (strain ATCC 9039 / DSM 1715 / NCIMB 8712).